The chain runs to 166 residues: Photosystem I assembly protein Ycf3 (166 aa).

TPR repeat units follow at residues 35–68 (AFVY…EVDP), 72–105 (SFIF…NPSL), and 120–153 (GEQA…APLN).

It belongs to the Ycf3 family.

It is found in the plastid. The protein localises to the chloroplast thylakoid membrane. In terms of biological role, essential for the assembly of the photosystem I (PSI) complex. May act as a chaperone-like factor to guide the assembly of the PSI subunits. The chain is Photosystem I assembly protein Ycf3 from Ostreococcus tauri.